Consider the following 264-residue polypeptide: Undecaprenyl-diphosphatase (264 aa).

Transmembrane regions (helical) follow at residues 1-21 (MDIV…FLPI), 39-59 (QGLA…VFYF), 83-103 (STLV…GLAF), 113-133 (SGIV…LADK), 143-163 (VTIK…IPGV), 181-201 (VGSA…AGGL), 220-240 (LAAL…MSII), and 244-264 (SMTP…FIFV).

The protein belongs to the UppP family.

Its subcellular location is the cell inner membrane. The catalysed reaction is di-trans,octa-cis-undecaprenyl diphosphate + H2O = di-trans,octa-cis-undecaprenyl phosphate + phosphate + H(+). Its function is as follows. Catalyzes the dephosphorylation of undecaprenyl diphosphate (UPP). Confers resistance to bacitracin. This Campylobacter curvus (strain 525.92) protein is Undecaprenyl-diphosphatase.